The following is a 283-amino-acid chain: Nucleoid occlusion protein (283 aa).

Residues 148–167 constitute a DNA-binding region (H-T-H motif); the sequence is EALAQRLGKGQSTIANKLRL.

It belongs to the ParB family.

It localises to the cytoplasm. It is found in the nucleoid. In terms of biological role, effects nucleoid occlusion by binding relatively nonspecifically to DNA and preventing the assembly of the division machinery in the vicinity of the nucleoid, especially under conditions that disturb the cell cycle. It helps to coordinate cell division and chromosome segregation by preventing the formation of the Z ring through the nucleoid, which would cause chromosome breakage. This chain is Nucleoid occlusion protein, found in Bacillus licheniformis (strain ATCC 14580 / DSM 13 / JCM 2505 / CCUG 7422 / NBRC 12200 / NCIMB 9375 / NCTC 10341 / NRRL NRS-1264 / Gibson 46).